Here is a 122-residue protein sequence, read N- to C-terminus: Putative iron-sulfur cluster insertion protein ErpA (122 aa).

Residues C50, C114, and C116 each coordinate iron-sulfur cluster.

The protein belongs to the HesB/IscA family. Homodimer. The cofactor is iron-sulfur cluster.

Functionally, required for insertion of 4Fe-4S clusters. The polypeptide is Putative iron-sulfur cluster insertion protein ErpA (Cupriavidus necator (strain ATCC 17699 / DSM 428 / KCTC 22496 / NCIMB 10442 / H16 / Stanier 337) (Ralstonia eutropha)).